A 417-amino-acid chain; its full sequence is D-amino acid dehydrogenase (417 aa).

Position 3–17 (3–17) interacts with FAD; sequence VVILGSGVVGVSTAW.

The protein belongs to the DadA oxidoreductase family. FAD serves as cofactor.

The enzyme catalyses a D-alpha-amino acid + A + H2O = a 2-oxocarboxylate + AH2 + NH4(+). Its pathway is amino-acid degradation; D-alanine degradation; NH(3) and pyruvate from D-alanine: step 1/1. Functionally, oxidative deamination of D-amino acids. The chain is D-amino acid dehydrogenase from Pectobacterium atrosepticum (strain SCRI 1043 / ATCC BAA-672) (Erwinia carotovora subsp. atroseptica).